A 621-amino-acid polypeptide reads, in one-letter code: Archaeal Lon protease (621 aa).

Over 1–117 the chain is Cytoplasmic; the sequence is MNEEVREILG…YKEEAMKKAQ (117 aa). 54–61 provides a ligand contact to ATP; the sequence is GSPGTGKS. Residues 118–136 traverse the membrane as a helical segment; the sequence is ARNFLIFTLVFLVIGYTVL. The Extracellular segment spans residues 137-141; sequence TNPGN. The helical transmembrane segment at 142 to 160 threads the bilayer; the sequence is LIWGIIAAVLILMMSRYFI. Over 161 to 621 the chain is Cytoplasmic; it reads PREDRNVPKL…KFKELELAAV (461 aa). Positions 423–602 constitute a Lon proteolytic domain; sequence GYEVGRVNGL…NEVLEHVLED (180 aa). Residues S509 and K552 contribute to the active site.

Belongs to the peptidase S16 family. Archaeal LonB subfamily. Homohexamer. Organized in a ring with a central cavity.

It is found in the cell membrane. Its function is as follows. ATP-dependent serine protease that mediates the selective degradation of mutant and abnormal proteins as well as certain short-lived regulatory proteins. Degrades polypeptides processively. The polypeptide is Archaeal Lon protease (Archaeoglobus fulgidus (strain ATCC 49558 / DSM 4304 / JCM 9628 / NBRC 100126 / VC-16)).